A 197-amino-acid chain; its full sequence is Imidazoleglycerol-phosphate dehydratase (197 aa).

This sequence belongs to the imidazoleglycerol-phosphate dehydratase family.

The protein localises to the cytoplasm. It catalyses the reaction D-erythro-1-(imidazol-4-yl)glycerol 3-phosphate = 3-(imidazol-4-yl)-2-oxopropyl phosphate + H2O. Its pathway is amino-acid biosynthesis; L-histidine biosynthesis; L-histidine from 5-phospho-alpha-D-ribose 1-diphosphate: step 6/9. The protein is Imidazoleglycerol-phosphate dehydratase of Bradyrhizobium sp. (strain BTAi1 / ATCC BAA-1182).